The chain runs to 218 residues: Elongation factor Ts (218 aa).

The involved in Mg(2+) ion dislocation from EF-Tu stretch occupies residues 82–85 (TDFV).

This sequence belongs to the EF-Ts family.

It is found in the cytoplasm. In terms of biological role, associates with the EF-Tu.GDP complex and induces the exchange of GDP to GTP. It remains bound to the aminoacyl-tRNA.EF-Tu.GTP complex up to the GTP hydrolysis stage on the ribosome. In Prochlorococcus marinus (strain MIT 9313), this protein is Elongation factor Ts.